The sequence spans 401 residues: Imidazolonepropionase (401 aa).

Fe(3+)-binding residues include histidine 66 and histidine 68. Residues histidine 66 and histidine 68 each coordinate Zn(2+). Residues arginine 75, tyrosine 138, and histidine 171 each coordinate 4-imidazolone-5-propanoate. An N-formimidoyl-L-glutamate-binding site is contributed by tyrosine 138. Histidine 236 lines the Fe(3+) pocket. Histidine 236 provides a ligand contact to Zn(2+). Glutamine 239 provides a ligand contact to 4-imidazolone-5-propanoate. Aspartate 311 contributes to the Fe(3+) binding site. Residue aspartate 311 coordinates Zn(2+). Asparagine 313 and glycine 315 together coordinate N-formimidoyl-L-glutamate. A 4-imidazolone-5-propanoate-binding site is contributed by threonine 316.

It belongs to the metallo-dependent hydrolases superfamily. HutI family. The cofactor is Zn(2+). It depends on Fe(3+) as a cofactor.

It localises to the cytoplasm. The catalysed reaction is 4-imidazolone-5-propanoate + H2O = N-formimidoyl-L-glutamate. It functions in the pathway amino-acid degradation; L-histidine degradation into L-glutamate; N-formimidoyl-L-glutamate from L-histidine: step 3/3. Catalyzes the hydrolytic cleavage of the carbon-nitrogen bond in imidazolone-5-propanoate to yield N-formimidoyl-L-glutamate. It is the third step in the universal histidine degradation pathway. The chain is Imidazolonepropionase from Pseudomonas fluorescens (strain Pf0-1).